Here is an 809-residue protein sequence, read N- to C-terminus: Glutamine--tRNA ligase (809 aa).

Positions 185-198 (DLIKKKTKNNEKKK) are enriched in basic and acidic residues. The disordered stretch occupies residues 185–216 (DLIKKKTKNNEKKKTNSAKKSSDNSASSGPKR). Positions 258–268 (PEPNGYLHIGH) match the 'HIGH' region motif. ATP is bound by residues 259–261 (EPN) and 265–271 (HIGHSKA). Aspartate 291 serves as a coordination point for L-glutamine. Serine 378 carries the phosphoserine modification. Residue tyrosine 440 coordinates L-glutamine. Residues threonine 459, 488–489 (RL), and 496–498 (LSK) contribute to the ATP site. A 'KMSKS' region motif is present at residues 495–499 (VLSKR).

The protein belongs to the class-I aminoacyl-tRNA synthetase family.

It carries out the reaction tRNA(Gln) + L-glutamine + ATP = L-glutaminyl-tRNA(Gln) + AMP + diphosphate. This Saccharomyces cerevisiae (strain ATCC 204508 / S288c) (Baker's yeast) protein is Glutamine--tRNA ligase (GLN4).